A 354-amino-acid polypeptide reads, in one-letter code: Cellular communication network factor 6 (354 aa).

Positions 1 to 23 (MQGLLFSTLLLAGLAQFCCRVQG) are cleaved as a signal peptide. The 74-residue stretch at 44–117 (RKQFCHWPCK…RYETGVCAYL (74 aa)) folds into the IGFBP N-terminal domain. Cystine bridges form between Cys48-Cys72, Cys52-Cys74, Cys54-Cys75, Cys61-Cys78, Cys86-Cys100, and Cys92-Cys114. Asn178 carries an N-linked (GlcNAc...) asparagine glycan. Residues 208–253 (KCLVQATKWTPCSRTCGMGISNRVTNENSNCEMRKEKRLCYIQPCD) enclose the TSP type-1 domain. 5 disulfide bridges follow: Cys268/Cys305, Cys285/Cys319, Cys296/Cys335, Cys299/Cys337, and Cys304/Cys341. Positions 268-342 (CQPTFQLSKA…TSCVCQRNCR (75 aa)) constitute a CTCK domain. An N-linked (GlcNAc...) asparagine glycan is attached at Asn308.

Belongs to the CCN family. As to expression, predominant expression in adult kidney and testis and fetal kidney. Weaker expression found in placenta, ovary, prostate and small intestine. Also expressed in skeletally-derived cells such as synoviocytes and articular cartilage chondrocytes.

The protein localises to the secreted. Its subcellular location is the mitochondrion. Functionally, plays a role in mitochondrial electron transport and mitochondrial respiration. Through its regulation of the mitochondrial function may play a role in normal postnatal skeletal growth and cartilage homeostasis. The chain is Cellular communication network factor 6 from Homo sapiens (Human).